The following is a 208-amino-acid chain: Ribosomal RNA large subunit methyltransferase E (208 aa).

S-adenosyl-L-methionine contacts are provided by Gly-62, Trp-64, Asp-82, Asp-98, and Asp-123. Lys-163 (proton acceptor) is an active-site residue.

The protein belongs to the class I-like SAM-binding methyltransferase superfamily. RNA methyltransferase RlmE family.

It localises to the cytoplasm. The enzyme catalyses uridine(2552) in 23S rRNA + S-adenosyl-L-methionine = 2'-O-methyluridine(2552) in 23S rRNA + S-adenosyl-L-homocysteine + H(+). Specifically methylates the uridine in position 2552 of 23S rRNA at the 2'-O position of the ribose in the fully assembled 50S ribosomal subunit. This chain is Ribosomal RNA large subunit methyltransferase E, found in Haemophilus ducreyi (strain 35000HP / ATCC 700724).